A 373-amino-acid chain; its full sequence is Ferroptosis suppressor protein 1 (373 aa).

G2 carries N-myristoyl glycine lipidation. The chain crosses the membrane as a helical span at residues 13-29 (VVVVGGGFGGTAAASLL). Residues 17–21 (GGGFG), R53, and V81 contribute to the 6-hydroxy-FAD site. The residue at position 167 (K167) is an N6-acetyllysine. A 6-hydroxy-FAD-binding site is contributed by D284.

Belongs to the FAD-dependent oxidoreductase family. 6-hydroxy-FAD is required as a cofactor. Post-translationally, N-myristoylation at Gly-2 mediates the recruitment to lipid droplets and plasma membrane. In terms of processing, acetylation at Lys-167 prevents AIFM2 ubiquitination and degradation, thereby inhibiting ferroptosis. KAT2B mediates acetylation at Lys-167, while HDAC3 removes it. Ubiquitinated. AIFM2 undergoes 'Lys-29'-ubiquitination and proteasomal degradation, which is inhibited by acetylation at Lys-167.

The protein localises to the lipid droplet. The protein resides in the cell membrane. It localises to the cytoplasm. It is found in the mitochondrion membrane. Its subcellular location is the nucleus. The enzyme catalyses ubiquinone-10 + NADH + H(+) = ubiquinol-10 + NAD(+). It catalyses the reaction phylloquinone + NADH + H(+) = phylloquinol + NAD(+). The catalysed reaction is menaquinone-4 + NADH + H(+) = menaquinol-4 + NAD(+). It carries out the reaction menadione + NADH + H(+) = menadiol + NAD(+). With respect to regulation, the modification by 4-hydroxy-2-nonenal (HNE) adduction in mitochondria results in loss of the oxidoreductase activity and activation of a novel function in mitochondrial oxidative stress signaling. An NAD(P)H-dependent oxidoreductase that acts as a key inhibitor of ferroptosis. At the plasma membrane, catalyzes reduction of coenzyme Q/ubiquinone-10 to ubiquinol-10, a lipophilic radical-trapping antioxidant that prevents lipid oxidative damage and consequently ferroptosis. Acts in parallel to GPX4 to suppress phospholipid peroxidation and ferroptosis. This anti-ferroptotic function is independent of cellular glutathione levels. Also acts as a potent radical-trapping antioxidant by mediating warfarin-resistant vitamin K reduction in the canonical vitamin K cycle: catalyzes NAD(P)H-dependent reduction of vitamin K (phylloquinone, menaquinone-4 and menadione) to hydroquinone forms. Hydroquinones act as potent radical-trapping antioxidants inhibitor of phospholipid peroxidation and ferroptosis. May play a role in mitochondrial stress signaling. Upon oxidative stress, associates with the lipid peroxidation end product 4-hydroxy-2-nonenal (HNE) forming a lipid adduct devoid of oxidoreductase activity, which then translocates from mitochondria into the nucleus triggering DNA damage and cell death. This is Ferroptosis suppressor protein 1 (AIFM2) from Taeniopygia guttata (Zebra finch).